The primary structure comprises 175 residues: MPTPADDLVVIGKIVSVYGIRGEVKVYSFTDPLDNLLDYRRWTLRRDGEIRQAELVRGRLHGKVLAAKLKGLDDREEARTFTGYEICIPRSELPSLEEGEYYWHQLEGLKVIDQGGQLLGVIDHLLETGANDVMVVKPCAGSLDDRERLLPYTGQCVLSIDLAAGEMRVDWDADF.

In terms of domain architecture, PRC barrel spans 98–175; it reads EGEYYWHQLE…EMRVDWDADF (78 aa).

This sequence belongs to the RimM family. As to quaternary structure, binds ribosomal protein uS19.

The protein resides in the cytoplasm. An accessory protein needed during the final step in the assembly of 30S ribosomal subunit, possibly for assembly of the head region. Essential for efficient processing of 16S rRNA. May be needed both before and after RbfA during the maturation of 16S rRNA. It has affinity for free ribosomal 30S subunits but not for 70S ribosomes. In Pseudomonas aeruginosa (strain UCBPP-PA14), this protein is Ribosome maturation factor RimM.